A 163-amino-acid chain; its full sequence is Ubiquitin-like protein 1-ribosomal protein eS31 fusion protein (163 aa).

Positions 1-70 (MVFVKTLHRT…IYVNLELLGG (70 aa)) constitute a Ubiquitin-like domain. Residue G70 forms a Glycyl lysine isopeptide (Gly-Lys) (interchain with K-? in acceptor proteins) linkage. The C4-type zinc finger occupies 115-138 (CQQPSCGGGVFMAQHANRHYCGRC).

It in the N-terminal section; belongs to the ubiquitin family. The protein in the C-terminal section; belongs to the eukaryotic ribosomal protein eS31 family.

The polypeptide is Ubiquitin-like protein 1-ribosomal protein eS31 fusion protein (Caenorhabditis elegans).